We begin with the raw amino-acid sequence, 465 residues long: Argininosuccinate lyase (465 aa).

The protein belongs to the lyase 1 family. Argininosuccinate lyase subfamily.

The protein localises to the cytoplasm. The catalysed reaction is 2-(N(omega)-L-arginino)succinate = fumarate + L-arginine. The protein operates within amino-acid biosynthesis; L-arginine biosynthesis; L-arginine from L-ornithine and carbamoyl phosphate: step 3/3. The protein is Argininosuccinate lyase of Rhodopseudomonas palustris (strain BisB18).